The following is a 548-amino-acid chain: MSSMAKSPDMRTPGCCSPLRTKELLERQRSSRCTPAKGYLTPRNCQSPKHPEMRIPSIFVTDADYGLERPKQLLQRLERSLYRSSSASKVPPKHSLLASQNRQRTWEGPKTPEFRSRTNKTIPASEPRPRRAKELLEDLRSKHQGTPATKIPSQRNPKENQELSKSHTCIPSSEPQPIRPKLILERERQESITNRLASTSIDRLKTKPPRSSFTSSRLLVPQMGFSYPKDPKRLHESDKGIKLTTSKRKLDFKTELGTDWLRRELEKIGKEWRKKTDYQLRQLISGFVKQLVRLLPFNGITFSHLSRDCYVQQMVEALQQLQYTKKVNKSWLQTPNSTQAIAHVLELLNFLLDVLEHRKGEGMCALPVVSEKQRIEQLASASGTSYDVMSLQQKFENIKIEKERLNNYQESLMPESPVSKDMDKVTERDGNQDFVRLLDFQKETLHELQLQRLRLQEFSELVSLAKIKLKRCCKANKQCIEAFNDQIQDLADCVVLRNRNIGLLTQLHLNDNPKEEELHERMKQLQRLYEDNYSNLLQLNIKPPQGSP.

Disordered stretches follow at residues 1 to 51 (MSSM…PKHP) and 82 to 181 (YRSS…IRPK). 3 stretches are compositionally biased toward basic and acidic residues: residues 20-29 (RTKELLERQR), 104-116 (RTWEGPKTPEFRS), and 127-141 (PRPRRAKELLEDLRS). The tract at residues 100–253 (QNRQRTWEGP…TTSKRKLDFK (154 aa)) is important for kinetochore and microtubule localization. A compositionally biased stretch (polar residues) spans 144–155 (QGTPATKIPSQR). Positions 149 to 152 (TKIP) match the SXIP motif 1 motif. Basic and acidic residues predominate over residues 156–165 (NPKENQELSK). Positions 166-175 (SHTCIPSSEP) are enriched in polar residues. Positions 168-171 (TCIP) match the SXIP motif 2 motif. Residues 237-372 (SDKGIKLTTS…MCALPVVSEK (136 aa)) form a CH (calponin-homology)-like region, which is not required for kinetochore and microtubule localization region. A coiled-coil region spans residues 386 to 457 (YDVMSLQQKF…LQLQRLRLQE (72 aa)).

Interacts with Eb1 via the two SxIP motifs; the interaction is not required for kebab kinetochore localization.

The protein localises to the cytoplasm. It localises to the perinuclear region. The protein resides in the chromosome. It is found in the centromere. Its subcellular location is the kinetochore. The protein localises to the cytoskeleton. It localises to the spindle. In Drosophila melanogaster (Fruit fly), this protein is Kinetochore and Eb1-associated basic protein.